Consider the following 865-residue polypeptide: Centrosomal protein of 97 kDa (865 aa).

8 LRR repeats span residues 37–58, 59–80, 81–102, 103–124, 125–146, 147–168, 171–192, and 196–205; these read DIHT…EKCK, RLIQ…AKLT, LLRV…KELV, HLEW…NSCT, ALQH…SKLV, SLKT…PAYL, SLAI…SFLA, and ELEQLSIMNN. The 39-residue stretch at 211–249 folds into the LRRCT domain; that stretch reads TPSIPGFDYRPYIVSWCLNLRVLDGYVISQKESLKAEWL. The CCP110-binding stretch occupies residues 300-750; the sequence is HQRQLMNQSQ…RYGKESDLGD (451 aa). A phosphoserine mark is found at Ser308, Ser413, and Ser500. Residues 506–529 are disordered; the sequence is ESTEQKQSDIKKPENTQPENKETI. Positions 508–527 are enriched in basic and acidic residues; that stretch reads TEQKQSDIKKPENTQPENKE. Ser530 is subject to Phosphoserine. Thr542 carries the post-translational modification Phosphothreonine. The IQ domain maps to 558-587; sequence LNDAATKLQACWRGFYARNYNPQAKDVRYE. The tract at residues 587-865 is interaction with MPHOSPH9; it reads EIRLRRMQEH…FQLLHVGVTV (279 aa). The interval 715 to 769 is disordered; it reads QHSLDFEKSSTEGSESSIMGNSIDTVRYGKESDLGDVSEEHGEWNKESSNNEQDN. Residues 725–738 show a composition bias toward polar residues; the sequence is TEGSESSIMGNSID. Basic and acidic residues predominate over residues 741–760; that stretch reads RYGKESDLGDVSEEHGEWNK. Ser763 carries the post-translational modification Phosphoserine.

As to quaternary structure, interacts with CALM1, CEP76, KIF24 and TALPID3. Interacts with CCP110. ENKD1 competes with CEP97 for binding to CCP110, destabilizing the interaction between CP110 and CEP97 which promotes the removal of CCP110 and CEP97 from the mother centriole and allows the initiation of ciliogenesis. Via its interaction with CCP110, may indirectly interact with HERC2 and NEURL4. Interacts with MPHOSPH9.

The protein resides in the cytoplasm. Its subcellular location is the cytoskeleton. The protein localises to the microtubule organizing center. It localises to the centrosome. It is found in the centriole. Functionally, acts as a key negative regulator of ciliogenesis in collaboration with CCP110 by capping the mother centriole thereby preventing cilia formation. Required for recruitment of CCP110 to the centrosome. The sequence is that of Centrosomal protein of 97 kDa (CEP97) from Homo sapiens (Human).